The primary structure comprises 441 residues: Mannose-6-phosphate isomerase (441 aa).

Zn(2+)-binding residues include Gln111, His113, Glu138, and His285. Residue Arg304 is part of the active site.

The protein belongs to the mannose-6-phosphate isomerase type 1 family. Monomer. It depends on Zn(2+) as a cofactor.

It is found in the cytoplasm. The enzyme catalyses D-mannose 6-phosphate = D-fructose 6-phosphate. It participates in nucleotide-sugar biosynthesis; GDP-alpha-D-mannose biosynthesis; alpha-D-mannose 1-phosphate from D-fructose 6-phosphate: step 1/2. Its function is as follows. Involved in the synthesis of the GDP-mannose and dolichol-phosphate-mannose required for a number of critical mannosyl transfer reactions. This is Mannose-6-phosphate isomerase (PMI1) from Candida albicans (strain SC5314 / ATCC MYA-2876) (Yeast).